The following is a 787-amino-acid chain: ISWI one complex protein 3 (787 aa).

Positions 1–22 (MDSPSNSIQNLQQEAQGSSSAQ) are enriched in polar residues. Disordered stretches follow at residues 1 to 137 (MDSP…AHEQ), 672 to 693 (ILEQKSTTDNNPSINTNPLPKD), and 749 to 787 (TEYDSEEYVDDEEDDEADIYDDNDNDSSFDDGRVKRQRT). Low complexity predominate over residues 40-50 (DQSVSVSQSSD). Basic residues predominate over residues 79–92 (KPKRKRPAPPKKKA). A compositionally biased stretch (basic and acidic residues) spans 100 to 137 (SNDKVEKKKTTSIAKDGKPTLKTNDKKVAPKPKPAHEQ). Positions 675 to 689 (QKSTTDNNPSINTNP) are enriched in polar residues. The span at 751–777 (YDSEEYVDDEEDDEADIYDDNDNDSSF) shows a compositional bias: acidic residues. Positions 778 to 787 (DDGRVKRQRT) are enriched in basic and acidic residues.

Component of the ISW1A complex, which at least consists of ISW1 and IOC3.

Its subcellular location is the nucleus. In terms of biological role, functions as a component of the ISW1A complex, which acts in remodeling the chromatin by catalyzing an ATP-dependent alteration in the structure of nucleosomal DNA. The ISW1A complex represses gene expression at initiation through specific positioning of a promoter proximal dinucleosome. The protein is ISWI one complex protein 3 (IOC3) of Saccharomyces cerevisiae (strain ATCC 204508 / S288c) (Baker's yeast).